A 375-amino-acid chain; its full sequence is Transaldolase (375 aa).

Catalysis depends on Lys145, which acts as the Schiff-base intermediate with substrate.

This sequence belongs to the transaldolase family. Type 2 subfamily.

It localises to the cytoplasm. It carries out the reaction D-sedoheptulose 7-phosphate + D-glyceraldehyde 3-phosphate = D-erythrose 4-phosphate + beta-D-fructose 6-phosphate. Its pathway is carbohydrate degradation; pentose phosphate pathway; D-glyceraldehyde 3-phosphate and beta-D-fructose 6-phosphate from D-ribose 5-phosphate and D-xylulose 5-phosphate (non-oxidative stage): step 2/3. Functionally, transaldolase is important for the balance of metabolites in the pentose-phosphate pathway. The protein is Transaldolase of Mycobacterium leprae (strain Br4923).